We begin with the raw amino-acid sequence, 162 residues long: NADPH-dependent 7-cyano-7-deazaguanine reductase (162 aa).

The active-site Thioimide intermediate is Cys-53. Asp-60 acts as the Proton donor in catalysis. Substrate contacts are provided by residues 75-77 (VES) and 94-95 (HE).

The protein belongs to the GTP cyclohydrolase I family. QueF type 1 subfamily.

The protein resides in the cytoplasm. It catalyses the reaction 7-aminomethyl-7-carbaguanine + 2 NADP(+) = 7-cyano-7-deazaguanine + 2 NADPH + 3 H(+). It participates in tRNA modification; tRNA-queuosine biosynthesis. Catalyzes the NADPH-dependent reduction of 7-cyano-7-deazaguanine (preQ0) to 7-aminomethyl-7-deazaguanine (preQ1). This Streptococcus mutans serotype c (strain ATCC 700610 / UA159) protein is NADPH-dependent 7-cyano-7-deazaguanine reductase.